Consider the following 294-residue polypeptide: Lipoyl synthase 1 (294 aa).

[4Fe-4S] cluster is bound by residues Cys-38, Cys-43, Cys-49, Cys-64, Cys-68, Cys-71, and Ser-279. Positions 50 to 268 constitute a Radical SAM core domain; the sequence is FAGGTATFLI…EEGQTRFGFL (219 aa).

It belongs to the radical SAM superfamily. Lipoyl synthase family. [4Fe-4S] cluster serves as cofactor.

It is found in the cytoplasm. The catalysed reaction is [[Fe-S] cluster scaffold protein carrying a second [4Fe-4S](2+) cluster] + N(6)-octanoyl-L-lysyl-[protein] + 2 oxidized [2Fe-2S]-[ferredoxin] + 2 S-adenosyl-L-methionine + 4 H(+) = [[Fe-S] cluster scaffold protein] + N(6)-[(R)-dihydrolipoyl]-L-lysyl-[protein] + 4 Fe(3+) + 2 hydrogen sulfide + 2 5'-deoxyadenosine + 2 L-methionine + 2 reduced [2Fe-2S]-[ferredoxin]. The protein operates within protein modification; protein lipoylation via endogenous pathway; protein N(6)-(lipoyl)lysine from octanoyl-[acyl-carrier-protein]: step 2/2. In terms of biological role, catalyzes the radical-mediated insertion of two sulfur atoms into the C-6 and C-8 positions of the octanoyl moiety bound to the lipoyl domains of lipoate-dependent enzymes, thereby converting the octanoylated domains into lipoylated derivatives. The chain is Lipoyl synthase 1 from Prochlorococcus marinus (strain SARG / CCMP1375 / SS120).